The primary structure comprises 35 residues: Tau/kappa-theraphotoxin-Pc1a (35 aa).

Intrachain disulfides connect Cys3–Cys17, Cys10–Cys22, and Cys16–Cys29. Residue Phe35 is modified to Phenylalanine amide.

The protein belongs to the neurotoxin 10 (Hwtx-1) family. 62 (Vatx) subfamily. As to expression, expressed by the venom gland.

Its subcellular location is the secreted. Selectively activates mammalian TRPV1, the capsaicin receptor, a non-selective cation channel expressed by sensory neurons of the pain pathway. Is less potent than VaTx2 and VaTx3. Interacts with distinct regions of the channel than capsaicin, since it only acts on the extracellular face of the channel, and capsaicin binds to the cytosolic side. Also activates avian TRPV1, which is insensitive to capsaicin. Significantly inhibits potassium channels Kv2.1/KCNB1. The sequence is that of Tau/kappa-theraphotoxin-Pc1a from Psalmopoeus cambridgei (Trinidad chevron tarantula).